The chain runs to 533 residues: Protein trichome birefringence-like 18 (533 aa).

Residues Val-21–Leu-41 form a helical; Signal-anchor for type II membrane protein membrane-spanning segment. The interval Ser-93 to Ala-171 is disordered. A compositionally biased stretch (basic and acidic residues) spans Ser-113–Asp-154. A GDS motif motif is present at residues Gly-248–Ser-250. A disordered region spans residues His-475–Gln-502. The DCXHWCLPGXXDXWN motif signature appears at Asp-503 to Asn-517.

The protein belongs to the PC-esterase family. TBL subfamily.

It localises to the membrane. Functionally, may act as a bridging protein that binds pectin and other cell wall polysaccharides. Probably involved in maintaining esterification of pectins. May be involved in the specific O-acetylation of cell wall polymers. This chain is Protein trichome birefringence-like 18 (TBL18), found in Arabidopsis thaliana (Mouse-ear cress).